A 501-amino-acid chain; its full sequence is Probable sucrose utilization protein SUC1 (501 aa).

Positions 13–39 (CDSCSFRKVKCDMKTPCSRCVLNNLKC) form a DNA-binding region, zn(2)-C6 fungal-type.

It belongs to the MAL13 family.

The protein localises to the nucleus. Its function is as follows. Affects sucrose utilization and alpha-glucosidase activity. Probable transcriptional activator. In Candida albicans (strain SC5314 / ATCC MYA-2876) (Yeast), this protein is Probable sucrose utilization protein SUC1 (SUC1).